A 318-amino-acid polypeptide reads, in one-letter code: MFMINLLLMIVPILLAVAFLTLVERKVLGYMQLRKGPNVVGPYGLLQPIADAIKLFTKEPLRPLTSSISMFIIAPILALALALTMWTPLPMPYPLINMNLGVLFMLAMSSLAVYSILWSGWASNSKYALIGALRAVAQTISYEVTLAIILLSVLLLNGSFTLPTLITTQEHMWLIIPSWPLAMMWFISTLAETNRAPFDLTEGESELVSGFNVEYAGGPFALFFLAEYANIIMMNIFTTILFLGAFHNPLMPELYTINFVTKSMLLTISFLWVRASYPRFRYDQLMHLLWKNFLPLTLALCMWHVTMPIITAGVPPLT.

A run of 8 helical transmembrane segments spans residues 2 to 22 (FMINLLLMIVPILLAVAFLTL), 68 to 88 (ISMFIIAPILALALALTMWTP), 100 to 120 (LGVLFMLAMSSLAVYSILWSG), 146 to 166 (LAIILLSVLLLNGSFTLPTLI), 171 to 191 (HMWLIIPSWPLAMMWFISTLA), 222 to 242 (LFFLAEYANIIMMNIFTTILF), 253 to 273 (ELYTINFVTKSMLLTISFLWV), and 293 to 313 (FLPLTLALCMWHVTMPIITAG).

The protein belongs to the complex I subunit 1 family. In terms of assembly, core subunit of respiratory chain NADH dehydrogenase (Complex I) which is composed of 45 different subunits.

The protein resides in the mitochondrion inner membrane. It carries out the reaction a ubiquinone + NADH + 5 H(+)(in) = a ubiquinol + NAD(+) + 4 H(+)(out). Functionally, core subunit of the mitochondrial membrane respiratory chain NADH dehydrogenase (Complex I) which catalyzes electron transfer from NADH through the respiratory chain, using ubiquinone as an electron acceptor. Essential for the catalytic activity and assembly of complex I. The sequence is that of NADH-ubiquinone oxidoreductase chain 1 (MT-ND1) from Hipposideros diadema (Diadem leaf-nosed bat).